Reading from the N-terminus, the 291-residue chain is 33 kDa chaperonin (291 aa).

2 disulfide bridges follow: cysteine 237/cysteine 239 and cysteine 270/cysteine 273.

The protein belongs to the HSP33 family. Post-translationally, under oxidizing conditions two disulfide bonds are formed involving the reactive cysteines. Under reducing conditions zinc is bound to the reactive cysteines and the protein is inactive.

Its subcellular location is the cytoplasm. Redox regulated molecular chaperone. Protects both thermally unfolding and oxidatively damaged proteins from irreversible aggregation. Plays an important role in the bacterial defense system toward oxidative stress. This is 33 kDa chaperonin from Bacillus cereus (strain B4264).